Here is a 322-residue protein sequence, read N- to C-terminus: Thioredoxin reductase (322 aa).

FAD-binding positions include 11-14, 40-41, Gln45, Asn54, Val87, and Cys145; these read SGPA and IA. Residues Cys142 and Cys145 are joined by a disulfide bond. Ser192 bears the Phosphoserine mark. Thr278 is modified (phosphothreonine). At Ser279 the chain carries Phosphoserine. Residues Asp288 and 295–297 contribute to the FAD site; that span reads RQA.

Belongs to the class-II pyridine nucleotide-disulfide oxidoreductase family. In terms of assembly, homodimer. The cofactor is FAD.

The protein localises to the cytoplasm. The catalysed reaction is [thioredoxin]-dithiol + NADP(+) = [thioredoxin]-disulfide + NADPH + H(+). The sequence is that of Thioredoxin reductase (trr1) from Schizosaccharomyces pombe (strain 972 / ATCC 24843) (Fission yeast).